The following is a 366-amino-acid chain: Isocitrate dehydrogenase [NAD] subunit alpha, mitochondrial (366 aa).

The transit peptide at 1–27 (MAGPAWISKVSRLLGAFHNPKQVTRGF) directs the protein to the mitochondrion. At lysine 77 the chain carries N6-succinyllysine. At threonine 101 the chain carries Phosphothreonine. Substrate contacts are provided by arginine 115, arginine 125, and arginine 146. N6-acetyllysine is present on lysine 223. Mg(2+) contacts are provided by aspartate 233, aspartate 257, and aspartate 261. Residue lysine 343 is modified to N6-acetyllysine; alternate. Lysine 343 is modified (N6-succinyllysine; alternate). Lysine 350 bears the N6-succinyllysine mark.

Belongs to the isocitrate and isopropylmalate dehydrogenases family. In terms of assembly, heterooligomer of subunits alpha (IDH3A), beta (IDH3B), and gamma (IDH3G) in the apparent ratio of 2:1:1. The heterodimer containing one IDH3A and one IDH3B subunit and the heterodimer containing one IDH3A and one IDH3G subunit assemble into a heterotetramer (which contains two subunits of IDH3A, one of IDH3B and one of IDH3G) and further into the heterooctamer. Requires Mg(2+) as cofactor. Mn(2+) is required as a cofactor.

The protein localises to the mitochondrion. The catalysed reaction is D-threo-isocitrate + NAD(+) = 2-oxoglutarate + CO2 + NADH. Its activity is regulated as follows. The heterotetramer and the heterodimer composed of IDH3A and IDH3G subunits can be allosterically activated by citrate (CIT) or/and ADP, and the two activators can act independently or synergistically. The heterodimer composed of IDH3A and IDH3B subunits cannot be allosterically regulated and the allosteric regulation of the heterotetramer is through the IDH3G subunit and not the IDH3B subunit. The IDH3G subunit contains the allosteric site which consists of a CIT-binding site and an ADP-binding site, and the binding of CIT and ADP causes conformational changes at the allosteric site which are transmitted to the active site in the catalytic subunit (IDH3A) through a cascade of conformational changes at the heterodimer interface, leading to stabilization of the isocitrate-binding at the active site and thus activation of the enzyme. ATP can activate the heterotetramer and the heterodimer composed of IDH3A and IDH3G subunits at low concentrations but inhibits their activities at high concentrations, whereas ATP exhibits only inhibitory effect on the heterodimer composed of IDH3A and IDH3B subunits. Its function is as follows. Catalytic subunit of the enzyme which catalyzes the decarboxylation of isocitrate (ICT) into alpha-ketoglutarate. The heterodimer composed of the alpha (IDH3A) and beta (IDH3B) subunits and the heterodimer composed of the alpha (IDH3A) and gamma (IDH3G) subunits, have considerable basal activity but the full activity of the heterotetramer (containing two subunits of IDH3A, one of IDH3B and one of IDH3G) requires the assembly and cooperative function of both heterodimers. The chain is Isocitrate dehydrogenase [NAD] subunit alpha, mitochondrial from Pongo abelii (Sumatran orangutan).